A 166-amino-acid polypeptide reads, in one-letter code: UPF0179 protein Tneu_1978 (166 aa).

The disordered stretch occupies residues 140-166 (PPSPSKSGGATASRDPSRAPPSRPLSK). Over residues 157 to 166 (RAPPSRPLSK) the composition is skewed to pro residues.

It belongs to the UPF0179 family.

This Pyrobaculum neutrophilum (strain DSM 2338 / JCM 9278 / NBRC 100436 / V24Sta) (Thermoproteus neutrophilus) protein is UPF0179 protein Tneu_1978.